The primary structure comprises 200 residues: Synaptobrevin homolog YKT6 (200 aa).

Positions 7 to 129 constitute a Longin domain; sequence GVFRSGGEKA…LKMKQLDTYI (123 aa). Positions 140 to 200 constitute a v-SNARE coiled-coil homology domain; sequence AIMKVQQELD…KKSNSCCIIM (61 aa). Residue Thr-158 is modified to Phosphothreonine. A lipid anchor (S-palmitoyl cysteine) is attached at Cys-196. Residue Cys-197 is modified to Cysteine methyl ester. Residue Cys-197 is the site of S-farnesyl cysteine attachment. A propeptide spans 198 to 200 (removed in mature form); the sequence is IIM.

The protein belongs to the synaptobrevin family.

Its subcellular location is the cell membrane. In Saccharomyces cerevisiae (strain ATCC 204508 / S288c) (Baker's yeast), this protein is Synaptobrevin homolog YKT6 (YKT6).